The following is a 128-amino-acid chain: Natriuretic peptides A (128 aa).

The segment at 36–84 (QVASEQNEEAGAVLSALPEVPSWPGEAGPAQREGGALGRGPWDSSDRSA) is disordered. Residues 68-78 (EGGALGRGPWD) constitute a propeptide that is removed on maturation. A Phosphoserine modification is found at serine 104. Cysteine 105 and cysteine 121 are oxidised to a cystine. The interval 122 to 126 (NSFRY) is important for degradation of atrial natriuretic peptide by IDE.

Belongs to the natriuretic peptide family. As to quaternary structure, homodimer; disulfide-linked antiparallel dimer. The precursor molecule is proteolytically cleaved by CORIN at Arg-98 to produce atrial natriuretic peptide. Undergoes further proteolytic cleavage by unknown proteases to give rise to long-acting natriuretic peptide, vessel dilator and kaliuretic peptide. Additional processing gives rise to the auriculin and atriopeptin peptides. In the kidneys, alternative processing by an unknown protease results in the peptide urodilatin. Post-translationally, cleavage by MME initiates degradation of the factor and thereby regulates its activity. Degraded by IDE (in vitro). During IDE degradation, the resulting products can temporarily stimulate NPR2 to produce cGMP, before the fragments are completely degraded and inactivated by IDE (in vitro). In terms of processing, degraded by IDE. Phosphorylation on Ser-104 decreases vasorelaxant activity.

It localises to the secreted. It is found in the perikaryon. Its subcellular location is the cell projection. In terms of biological role, hormone that plays a key role in mediating cardio-renal homeostasis, and is involved in vascular remodeling and regulating energy metabolism. Acts by specifically binding and stimulating NPR1 to produce cGMP, which in turn activates effector proteins, such as PRKG1, that drive various biological responses. Regulates vasodilation, natriuresis, diuresis and aldosterone synthesis and is therefore essential for regulating blood pressure, controlling the extracellular fluid volume and maintaining the fluid-electrolyte balance. Also involved in inhibiting cardiac remodeling and cardiac hypertrophy by inducing cardiomyocyte apoptosis and attenuating the growth of cardiomyocytes and fibroblasts. Plays a role in female pregnancy by promoting trophoblast invasion and spiral artery remodeling in uterus, and thus prevents pregnancy-induced hypertension. In adipose tissue, acts in various cGMP- and PKG-dependent pathways to regulate lipid metabolism and energy homeostasis. This includes up-regulating lipid metabolism and mitochondrial oxygen utilization by activating the AMP-activated protein kinase (AMPK), and increasing energy expenditure by acting via MAPK11 to promote the UCP1-dependent thermogenesis of brown adipose tissue. Binds the clearance receptor NPR3 which removes the hormone from circulation. Functionally, may have a role in cardio-renal homeostasis through regulation of natriuresis, diuresis, vasodilation, and inhibiting aldosterone synthesis. In vitro, promotes the production of cGMP and induces vasodilation. May promote natriuresis, at least in part, by enhancing prostaglandin E2 synthesis resulting in the inhibition of renal Na+-K+-ATPase. However reports on the involvement of this peptide in mammal blood volume and blood pressure homeostasis are conflicting; according to a report, in vivo it is not sufficient to activate cGMP and does not inhibit collecting duct transport nor effect diuresis and natriuresis. Appears to bind to specific receptors that are distinct from the receptors bound by atrial natriuretic peptide and vessel dilator. Possibly enhances protein excretion in urine by decreasing proximal tubular protein reabsorption. May have a role in cardio-renal homeostasis through regulation of natriuresis, diuresis, and vasodilation. In vitro, promotes the production of cGMP and induces vasodilation. May promote natriuresis, at least in part, by enhancing prostaglandin E2 synthesis resulting in the inhibition of renal Na+-K+-ATPase. However reports on the involvement of this peptide in mammal blood volume and blood pressure homeostasis are conflicting; according to a report it is not sufficient to activate cGMP and does not inhibit collecting duct transport nor effect diuresis and natriuresis. Appears to bind to specific receptors that are distinct from the receptors bound by the atrial natriuretic and long-acting natriuretic peptides. Possibly functions in protein excretion in urine by maintaining the integrity of the proximal tubules and enhancing protein excretion by decreasing proximal tubular protein reabsorption. Its function is as follows. May have a role in cardio-renal homeostasis through regulation of diuresis and inhibiting aldosterone synthesis. In vitro, promotes the production of cGMP and induces vasodilation. May promote natriuresis, at least in part, by enhancing prostaglandin E2 synthesis resulting in the inhibition of renal Na+-K+-ATPase. May have a role in potassium excretion but not sodium excretion (natriuresis). Possibly enhances protein excretion in urine by decreasing proximal tubular protein reabsorption. In terms of biological role, hormone produced in the kidneys that appears to be important for maintaining cardio-renal homeostasis. Mediates vasodilation, natriuresis and diuresis primarily in the renal system, in order to maintain the extracellular fluid volume and control the fluid-electrolyte balance. Specifically binds and stimulates cGMP production by renal transmembrane receptors, likely NPR1. Urodilatin not ANP, may be the natriuretic peptide responsible for the regulation of sodium and water homeostasis in the kidney. Functionally, may have a role in cardio-renal homeostasis through regulation of natriuresis and vasodilation. In vivo promotes natriuresis and in vitro, vasodilates renal artery strips. May have a role in cardio-renal homeostasis through regulation of regulation of natriuresis and vasodilation. In vivo promotes natriuresis. In vitro, vasodilates intestinal smooth muscle but not smooth muscle strips. Its function is as follows. May have a role in cardio-renal homeostasis through regulation of natriuresis and vasodilation. In vivo promotes natriuresis. In vitro, selectively vasodilates intestinal and vascular smooth muscle strips. In terms of biological role, may have a role in cardio-renal homeostasis through regulation of natriuresis and vasodilation. In vivo promotes natriuresis. In vitro, selectively vasodilates intestinal smooth muscle but not vascular smooth muscle strips. This Cavia porcellus (Guinea pig) protein is Natriuretic peptides A (NPPA).